The chain runs to 92 residues: MPRSLKKGPFIDLHLLKKVEKAVEAGDKKPIKTWSRRSMIIPQMIGLTIAVHNGRQHVPVFVTDEMIGHKLGEFSPTRTYRGHAADKKAKKR.

The protein belongs to the universal ribosomal protein uS19 family.

Protein S19 forms a complex with S13 that binds strongly to the 16S ribosomal RNA. This Shewanella amazonensis (strain ATCC BAA-1098 / SB2B) protein is Small ribosomal subunit protein uS19.